The chain runs to 236 residues: Uridylate kinase (236 aa).

10-13 (KLSG) contributes to the ATP binding site. UMP is bound at residue Gly-52. ATP is bound by residues Gly-53 and Arg-57. Residues Asp-72 and 133-140 (TGNPFFTT) each bind UMP. Residues Thr-160, Tyr-166, and Asp-169 each contribute to the ATP site.

This sequence belongs to the UMP kinase family. As to quaternary structure, homohexamer.

Its subcellular location is the cytoplasm. The enzyme catalyses UMP + ATP = UDP + ADP. It participates in pyrimidine metabolism; CTP biosynthesis via de novo pathway; UDP from UMP (UMPK route): step 1/1. With respect to regulation, inhibited by UTP. Catalyzes the reversible phosphorylation of UMP to UDP. The polypeptide is Uridylate kinase (Polaromonas naphthalenivorans (strain CJ2)).